Here is a 221-residue protein sequence, read N- to C-terminus: Ribonuclease T (221 aa).

The region spanning 20–194 is the Exonuclease domain; sequence VVIDIETAGF…YDTLQTANLF (175 aa). Residues D23, E25, H181, and D186 each coordinate Mg(2+). Catalysis depends on H181, which acts as the Proton donor/acceptor.

This sequence belongs to the RNase T family. In terms of assembly, homodimer. It depends on Mg(2+) as a cofactor.

Its function is as follows. Trims short 3' overhangs of a variety of RNA species, leaving a one or two nucleotide 3' overhang. Responsible for the end-turnover of tRNA: specifically removes the terminal AMP residue from uncharged tRNA (tRNA-C-C-A). Also appears to be involved in tRNA biosynthesis. The chain is Ribonuclease T from Buchnera aphidicola subsp. Acyrthosiphon pisum (strain APS) (Acyrthosiphon pisum symbiotic bacterium).